A 288-amino-acid chain; its full sequence is Large ribosomal subunit protein uL2 (288 aa).

Over residues 29–43 (PEKSLTRGFKRDKGR) the composition is skewed to basic and acidic residues. Disordered stretches follow at residues 29–59 (PEKS…GGHK) and 210–288 (GRNR…GRQS). Composition is skewed to basic residues over residues 210 to 221 (GRNRWKGRRPKV) and 272 to 288 (VRRR…GRQS).

It belongs to the universal ribosomal protein uL2 family. In terms of assembly, part of the 50S ribosomal subunit. Forms a bridge to the 30S subunit in the 70S ribosome.

Functionally, one of the primary rRNA binding proteins. Required for association of the 30S and 50S subunits to form the 70S ribosome, for tRNA binding and peptide bond formation. It has been suggested to have peptidyltransferase activity; this is somewhat controversial. Makes several contacts with the 16S rRNA in the 70S ribosome. The chain is Large ribosomal subunit protein uL2 from Thermosynechococcus vestitus (strain NIES-2133 / IAM M-273 / BP-1).